Here is a 1445-residue protein sequence, read N- to C-terminus: DNA-directed RNA polymerase subunit beta'' (1445 aa).

Positions 220, 293, 300, and 303 each coordinate Zn(2+).

It belongs to the RNA polymerase beta' chain family. RpoC2 subfamily. As to quaternary structure, in plastids the minimal PEP RNA polymerase catalytic core is composed of four subunits: alpha, beta, beta', and beta''. When a (nuclear-encoded) sigma factor is associated with the core the holoenzyme is formed, which can initiate transcription. Zn(2+) serves as cofactor.

It localises to the plastid. The protein localises to the chloroplast. The catalysed reaction is RNA(n) + a ribonucleoside 5'-triphosphate = RNA(n+1) + diphosphate. Functionally, DNA-dependent RNA polymerase catalyzes the transcription of DNA into RNA using the four ribonucleoside triphosphates as substrates. This is DNA-directed RNA polymerase subunit beta'' from Anthoceros angustus (Hornwort).